The sequence spans 530 residues: Ubiquitin carboxyl-terminal hydrolase 17-like protein 1 (530 aa).

The USP domain occupies Ala80–Lys375. Cys89 serves as the catalytic Nucleophile. Residue His334 is the Proton acceptor of the active site. Composition is skewed to basic and acidic residues over residues Ser382 to Arg392 and Asp398 to Asp411. The disordered stretch occupies residues Ser382–Asp411.

Belongs to the peptidase C19 family. USP17 subfamily.

The protein localises to the nucleus. It is found in the endoplasmic reticulum. The catalysed reaction is Thiol-dependent hydrolysis of ester, thioester, amide, peptide and isopeptide bonds formed by the C-terminal Gly of ubiquitin (a 76-residue protein attached to proteins as an intracellular targeting signal).. Deubiquitinating enzyme that removes conjugated ubiquitin from specific proteins to regulate different cellular processes that may include cell proliferation, progression through the cell cycle, apoptosis, cell migration, and the cellular response to viral infection. This is Ubiquitin carboxyl-terminal hydrolase 17-like protein 1 (USP17L1) from Homo sapiens (Human).